The primary structure comprises 324 residues: Zinc transporter ZIP1 (324 aa).

Residues M1 to K30 are Extracellular-facing. Residues L31–V51 form a helical membrane-spanning segment. Topologically, residues L52–A68 are cytoplasmic. The chain crosses the membrane as a helical span at residues L69–L89. Residues P90–H104 are Extracellular-facing. Residues V105–V125 form a helical membrane-spanning segment. Residues M126–R179 are Cytoplasmic-facing. The helical transmembrane segment at A180 to L200 threads the bilayer. Residues Q201 to R206 lie on the Extracellular side of the membrane. A helical membrane pass occupies residues A207 to L227. The Cytoplasmic segment spans residues R228–Q237. Residues V238 to A258 traverse the membrane as a helical segment. At A259–Q272 the chain is on the extracellular side. Residues S273–P293 traverse the membrane as a helical segment. Topologically, residues Q294–I303 are cytoplasmic. A helical membrane pass occupies residues L304 to I324.

It belongs to the ZIP transporter (TC 2.A.5) family. As to expression, ubiquitous, except in the pancreas. Highest levels seen in kidney, salivary gland and placenta.

The protein localises to the cell membrane. It is found in the endoplasmic reticulum membrane. The catalysed reaction is Zn(2+)(in) = Zn(2+)(out). Transporter for the divalent cation Zn(2+). Mediates the influx of Zn(2+) into cells from extracellular space. This Mus musculus (Mouse) protein is Zinc transporter ZIP1 (Slc39a1).